The sequence spans 428 residues: Light-independent protochlorophyllide reductase subunit N (428 aa).

Residues C29, C54, and C115 each coordinate [4Fe-4S] cluster.

Belongs to the BchN/ChlN family. In terms of assembly, protochlorophyllide reductase is composed of three subunits; BchL, BchN and BchB. Forms a heterotetramer of two BchB and two BchN subunits. The cofactor is [4Fe-4S] cluster.

The enzyme catalyses chlorophyllide a + oxidized 2[4Fe-4S]-[ferredoxin] + 2 ADP + 2 phosphate = protochlorophyllide a + reduced 2[4Fe-4S]-[ferredoxin] + 2 ATP + 2 H2O. It functions in the pathway porphyrin-containing compound metabolism; bacteriochlorophyll biosynthesis (light-independent). In terms of biological role, component of the dark-operative protochlorophyllide reductase (DPOR) that uses Mg-ATP and reduced ferredoxin to reduce ring D of protochlorophyllide (Pchlide) to form chlorophyllide a (Chlide). This reaction is light-independent. The NB-protein (BchN-BchB) is the catalytic component of the complex. The protein is Light-independent protochlorophyllide reductase subunit N of Cereibacter sphaeroides (strain ATCC 17025 / ATH 2.4.3) (Rhodobacter sphaeroides).